The sequence spans 1390 residues: Hepatocyte growth factor receptor (1390 aa).

The N-terminal stretch at 1 to 24 (MKAPAVLAPGILVLLFTLVQRSNG) is a signal peptide. The Extracellular portion of the chain corresponds to 25–932 (ECKEALAKSE…VIVQPDQNFT (908 aa)). Residues 27–515 (KEALAKSEMN…TGKKITKIPL (489 aa)) enclose the Sema domain. The N-linked (GlcNAc...) asparagine glycan is linked to asparagine 45. 4 cysteine pairs are disulfide-bonded: cysteine 95–cysteine 101, cysteine 98–cysteine 160, cysteine 133–cysteine 141, and cysteine 172–cysteine 175. Asparagine 106 carries N-linked (GlcNAc...) asparagine glycosylation. Asparagine 149 is a glycosylation site (N-linked (GlcNAc...) asparagine). An N-linked (GlcNAc...) asparagine glycan is attached at asparagine 202. Disulfide bonds link cysteine 298–cysteine 363 and cysteine 385–cysteine 397. Asparagine 399 and asparagine 405 each carry an N-linked (GlcNAc...) asparagine glycan. 4 disulfides stabilise this stretch: cysteine 520–cysteine 538, cysteine 526–cysteine 561, cysteine 529–cysteine 545, and cysteine 541–cysteine 551. IPT/TIG domains are found at residues 563 to 655 (PAIY…FSYV), 657 to 739 (PVIT…FSYR), and 742 to 836 (PIVY…LIYV). An O-linked (Man) threonine glycan is attached at threonine 582. N-linked (GlcNAc...) asparagine glycans are attached at residues asparagine 607 and asparagine 635. O-linked (Man) threonine glycosylation is found at threonine 676 and threonine 761. N-linked (GlcNAc...) asparagine glycosylation is found at asparagine 785, asparagine 879, and asparagine 930. Residues 933–955 (GLIAGVVSISIALLLLLGFFLWL) form a helical membrane-spanning segment. The Cytoplasmic portion of the chain corresponds to 956–1390 (KKRKQIKDLG…TRPASFWETS (435 aa)). Serine 966 carries the post-translational modification Phosphoserine. A Phosphothreonine modification is found at threonine 977. Residues serine 990, serine 997, and serine 1000 each carry the phosphoserine modification. The residue at position 1003 (tyrosine 1003) is a Phosphotyrosine. The 268-residue stretch at 1078–1345 (VHFNEVIGRG…RISAIFSTFI (268 aa)) folds into the Protein kinase domain. ATP-binding positions include 1084-1092 (IGRGHFGCV) and lysine 1110. Aspartate 1204 (proton acceptor) is an active-site residue. The segment at 1212-1390 (LDEKFTVKVA…TRPASFWETS (179 aa)) is interaction with RANBP9. Phosphotyrosine is present on tyrosine 1230. Phosphotyrosine; by autocatalysis occurs at positions 1234 and 1235. Position 1289 is a phosphothreonine (threonine 1289). Residues 1320–1359 (WHPKAEMRPSFSELVSRISAIFSTFIGEHYVHVNATYVNV) form an interaction with MUC20 region. Residues tyrosine 1349 and tyrosine 1356 each carry the phosphotyrosine; by autocatalysis modification. A Phosphotyrosine modification is found at tyrosine 1365.

Belongs to the protein kinase superfamily. Tyr protein kinase family. As to quaternary structure, heterodimer made of an alpha chain (50 kDa) and a beta chain (145 kDa) which are disulfide linked. Binds PLXNB1. Interacts when phosphorylated with downstream effectors including STAT3, PIK3R1, SRC, PCLG1, GRB2 and GAB1. Interacts with SPSB1, SPSB2 and SPSB4. Interacts with INPP5D/SHIP1. When phosphorylated at Tyr-1356, interacts with INPPL1/SHIP2. Interacts with RANBP9 and RANBP10, as well as SPSB1, SPSB2, SPSB3 and SPSB4. SPSB1 binding occurs in the presence and in the absence of HGF, however HGF treatment has a positive effect on this interaction. Interacts with MUC20; prevents interaction with GRB2 and suppresses hepatocyte growth factor-induced cell proliferation. Interacts with GRB10. Interacts with PTPN1 and PTPN2. Interacts with HSP90AA1 and HSP90AB1; the interaction suppresses MET kinase activity. Interacts with tensin TNS3. Interacts (when phosphorylated) with tensin TNS4 (via SH2 domain); the interaction increases MET protein stability by inhibiting MET endocytosis and subsequent lysosomal degradation. Autophosphorylated in response to ligand binding on Tyr-1234 and Tyr-1235 in the kinase domain leading to further phosphorylation of Tyr-1349 and Tyr-1356 in the C-terminal multifunctional docking site. Dephosphorylated by PTPRJ at Tyr-1349 and Tyr-1365. Dephosphorylated by PTPN1 and PTPN2. In terms of processing, ubiquitinated. Ubiquitination by CBL regulates the receptor stability and activity through proteasomal degradation. Post-translationally, O-mannosylation of IPT/TIG domains by TMEM260 is required for protein maturation. O-mannosylated residues are composed of single mannose glycans that are not elongated or modified.

The protein localises to the membrane. The enzyme catalyses L-tyrosyl-[protein] + ATP = O-phospho-L-tyrosyl-[protein] + ADP + H(+). In its inactive state, the C-terminal tail interacts with the catalytic domain and inhibits the kinase activity. Upon ligand binding, the C-terminal tail is displaced and becomes phosphorylated, thus increasing the kinase activity. In terms of biological role, receptor tyrosine kinase that transduces signals from the extracellular matrix into the cytoplasm by binding to hepatocyte growth factor/HGF ligand. Regulates many physiological processes including proliferation, scattering, morphogenesis and survival. Ligand binding at the cell surface induces autophosphorylation of MET on its intracellular domain that provides docking sites for downstream signaling molecules. Following activation by ligand, interacts with the PI3-kinase subunit PIK3R1, PLCG1, SRC, GRB2, STAT3 or the adapter GAB1. Recruitment of these downstream effectors by MET leads to the activation of several signaling cascades including the RAS-ERK, PI3 kinase-AKT, or PLCgamma-PKC. The RAS-ERK activation is associated with the morphogenetic effects while PI3K/AKT coordinates prosurvival effects. During embryonic development, MET signaling plays a role in gastrulation, development and migration of muscles and neuronal precursors, angiogenesis and kidney formation. In adults, participates in wound healing as well as organ regeneration and tissue remodeling. Also promotes differentiation and proliferation of hematopoietic cells. The protein is Hepatocyte growth factor receptor (MET) of Pan troglodytes (Chimpanzee).